Here is an 81-residue protein sequence, read N- to C-terminus: Short neurotoxin D (81 aa).

The first 21 residues, 1 to 21, serve as a signal peptide directing secretion; sequence MKTLLLTLVVVTIVCLDLGYT. Intrachain disulfides connect cysteine 24-cysteine 43, cysteine 38-cysteine 60, cysteine 62-cysteine 73, and cysteine 74-cysteine 79.

Belongs to the three-finger toxin family. Short-chain subfamily. Type I alpha-neurotoxin sub-subfamily. Expressed by the venom gland.

The protein resides in the secreted. Its function is as follows. Binds to muscle nicotinic acetylcholine receptor (nAChR) and inhibit acetylcholine from binding to the receptor, thereby impairing neuromuscular transmission. The chain is Short neurotoxin D from Aipysurus laevis (Olive sea snake).